The primary structure comprises 452 residues: Bifunctional protein GlmU (452 aa).

The tract at residues 1-218 (MKVLILAAGL…IVEVSGVNDR (218 aa)) is pyrophosphorylase. Residues 6 to 9 (LAAG), Lys-20, Gln-68, 73 to 74 (GT), 95 to 97 (YGD), Gly-134, Glu-147, Asn-162, and Asn-216 contribute to the UDP-N-acetyl-alpha-D-glucosamine site. Asp-97 is a Mg(2+) binding site. Asn-216 lines the Mg(2+) pocket. The segment at 219 to 239 (IQLAQLETIAKQRILEKLMLS) is linker. The N-acetyltransferase stretch occupies residues 240 to 452 (GVTIVDPNST…EELKNADHKE (213 aa)). 2 residues coordinate UDP-N-acetyl-alpha-D-glucosamine: Arg-321 and Lys-339. His-351 (proton acceptor) is an active-site residue. UDP-N-acetyl-alpha-D-glucosamine contacts are provided by Tyr-354 and Asn-365. Residues Ala-368, 374–375 (NY), Ser-393, Ala-411, and Arg-428 each bind acetyl-CoA.

It in the N-terminal section; belongs to the N-acetylglucosamine-1-phosphate uridyltransferase family. The protein in the C-terminal section; belongs to the transferase hexapeptide repeat family. In terms of assembly, homotrimer. Mg(2+) is required as a cofactor.

It is found in the cytoplasm. The catalysed reaction is alpha-D-glucosamine 1-phosphate + acetyl-CoA = N-acetyl-alpha-D-glucosamine 1-phosphate + CoA + H(+). It carries out the reaction N-acetyl-alpha-D-glucosamine 1-phosphate + UTP + H(+) = UDP-N-acetyl-alpha-D-glucosamine + diphosphate. Its pathway is nucleotide-sugar biosynthesis; UDP-N-acetyl-alpha-D-glucosamine biosynthesis; N-acetyl-alpha-D-glucosamine 1-phosphate from alpha-D-glucosamine 6-phosphate (route II): step 2/2. It functions in the pathway nucleotide-sugar biosynthesis; UDP-N-acetyl-alpha-D-glucosamine biosynthesis; UDP-N-acetyl-alpha-D-glucosamine from N-acetyl-alpha-D-glucosamine 1-phosphate: step 1/1. It participates in bacterial outer membrane biogenesis; LPS lipid A biosynthesis. Catalyzes the last two sequential reactions in the de novo biosynthetic pathway for UDP-N-acetylglucosamine (UDP-GlcNAc). The C-terminal domain catalyzes the transfer of acetyl group from acetyl coenzyme A to glucosamine-1-phosphate (GlcN-1-P) to produce N-acetylglucosamine-1-phosphate (GlcNAc-1-P), which is converted into UDP-GlcNAc by the transfer of uridine 5-monophosphate (from uridine 5-triphosphate), a reaction catalyzed by the N-terminal domain. The chain is Bifunctional protein GlmU from Fervidobacterium nodosum (strain ATCC 35602 / DSM 5306 / Rt17-B1).